Reading from the N-terminus, the 80-residue chain is uncharacterized protein (80 aa).

This is an uncharacterized protein from Salmonella phage P22 (Bacteriophage P22).